The sequence spans 117 residues: Minor capsid protein VP2 (117 aa).

Belongs to the lagovirus VP2 protein family. In terms of assembly, homooligomer. The portal-like structure consists in 12 copies of VP2. Interacts with capsid protein VP1.

The protein resides in the virion. The protein localises to the host cytoplasm. Functionally, minor structural protein that forms a portal-like structure at a unique three-fold axis of symmetry, following binding to the host receptor. The channel formed by VP2 may allow the delivery of the viral genome through the host endosomal membrane. The chain is Minor capsid protein VP2 from Oryctolagus cuniculus (Rabbit).